The following is a 194-amino-acid chain: Probable GTP-binding protein EngB (194 aa).

The EngB-type G domain occupies 22–194; it reads GKPEIALVGR…SVWEWITAHM (173 aa). Residues 30–37, 57–61, 75–78, 142–145, and 175–177 each bind GTP; these read GRSNVGKS, GKTQT, DVPG, TKSD, and FSS. 2 residues coordinate Mg(2+): S37 and T59.

This sequence belongs to the TRAFAC class TrmE-Era-EngA-EngB-Septin-like GTPase superfamily. EngB GTPase family. Requires Mg(2+) as cofactor.

Its function is as follows. Necessary for normal cell division and for the maintenance of normal septation. This Leuconostoc citreum (strain KM20) protein is Probable GTP-binding protein EngB.